The following is a 62-amino-acid chain: Zinc finger-containing protein P28b (62 aa).

The segment at Met-1–Arg-46 adopts an RING-type; degenerate zinc-finger fold.

The protein is Zinc finger-containing protein P28b of Vaccinia virus (strain Western Reserve) (VACV).